We begin with the raw amino-acid sequence, 277 residues long: MTPSIPVVVAGALGRMGAEVIKAVVGSADCMLVGAIDNTPGKEGSDIGLELGLGELEVAVTADFEGCLCAVSQSVRDAEAGAVLVDFTHPSVVYEHTRAAIAYGVHPVIGTTGLSPEQLSDLCQFAAKASIGGAVIPNFSVGMVLLQQAAAAAARFYDHAELTELHHNCKADAPSGTCIKTAELMEELGKSFNPAEVDEHESLAGSRGGRRESGLRLHSLRLPGLVAHQEVMFGAPGETYTLRHDTIDRSAYMPGVLLTVRKVRSLQTLVYGLERLI.

NAD(+)-binding positions include 11–16 (GALGRM) and 110–112 (GTT). His-166 serves as the catalytic Proton donor/acceptor. His-167 is a (S)-2,3,4,5-tetrahydrodipicolinate binding site. The active-site Proton donor is the Lys-170. 176 to 177 (GT) is a (S)-2,3,4,5-tetrahydrodipicolinate binding site.

It belongs to the DapB family.

The protein localises to the cytoplasm. It carries out the reaction (S)-2,3,4,5-tetrahydrodipicolinate + NAD(+) + H2O = (2S,4S)-4-hydroxy-2,3,4,5-tetrahydrodipicolinate + NADH + H(+). The catalysed reaction is (S)-2,3,4,5-tetrahydrodipicolinate + NADP(+) + H2O = (2S,4S)-4-hydroxy-2,3,4,5-tetrahydrodipicolinate + NADPH + H(+). Its pathway is amino-acid biosynthesis; L-lysine biosynthesis via DAP pathway; (S)-tetrahydrodipicolinate from L-aspartate: step 4/4. Its function is as follows. Catalyzes the conversion of 4-hydroxy-tetrahydrodipicolinate (HTPA) to tetrahydrodipicolinate. This is 4-hydroxy-tetrahydrodipicolinate reductase from Parasynechococcus marenigrum (strain WH8102).